The primary structure comprises 357 residues: Peptide chain release factor 1 (357 aa).

Residue Q236 is modified to N5-methylglutamine.

It belongs to the prokaryotic/mitochondrial release factor family. Post-translationally, methylated by PrmC. Methylation increases the termination efficiency of RF1.

The protein localises to the cytoplasm. In terms of biological role, peptide chain release factor 1 directs the termination of translation in response to the peptide chain termination codons UAG and UAA. The protein is Peptide chain release factor 1 of Mycolicibacterium vanbaalenii (strain DSM 7251 / JCM 13017 / BCRC 16820 / KCTC 9966 / NRRL B-24157 / PYR-1) (Mycobacterium vanbaalenii).